We begin with the raw amino-acid sequence, 114 residues long: Large ribosomal subunit protein uL22 (114 aa).

This sequence belongs to the universal ribosomal protein uL22 family. Part of the 50S ribosomal subunit.

Its function is as follows. This protein binds specifically to 23S rRNA; its binding is stimulated by other ribosomal proteins, e.g. L4, L17, and L20. It is important during the early stages of 50S assembly. It makes multiple contacts with different domains of the 23S rRNA in the assembled 50S subunit and ribosome. The globular domain of the protein is located near the polypeptide exit tunnel on the outside of the subunit, while an extended beta-hairpin is found that lines the wall of the exit tunnel in the center of the 70S ribosome. The chain is Large ribosomal subunit protein uL22 from Streptococcus mutans serotype c (strain ATCC 700610 / UA159).